Consider the following 96-residue polypeptide: Aspartyl/glutamyl-tRNA(Asn/Gln) amidotransferase subunit C (96 aa).

The protein belongs to the GatC family. Heterotrimer of A, B and C subunits.

The enzyme catalyses L-glutamyl-tRNA(Gln) + L-glutamine + ATP + H2O = L-glutaminyl-tRNA(Gln) + L-glutamate + ADP + phosphate + H(+). The catalysed reaction is L-aspartyl-tRNA(Asn) + L-glutamine + ATP + H2O = L-asparaginyl-tRNA(Asn) + L-glutamate + ADP + phosphate + 2 H(+). Functionally, allows the formation of correctly charged Asn-tRNA(Asn) or Gln-tRNA(Gln) through the transamidation of misacylated Asp-tRNA(Asn) or Glu-tRNA(Gln) in organisms which lack either or both of asparaginyl-tRNA or glutaminyl-tRNA synthetases. The reaction takes place in the presence of glutamine and ATP through an activated phospho-Asp-tRNA(Asn) or phospho-Glu-tRNA(Gln). The polypeptide is Aspartyl/glutamyl-tRNA(Asn/Gln) amidotransferase subunit C (Exiguobacterium sp. (strain ATCC BAA-1283 / AT1b)).